Reading from the N-terminus, the 277-residue chain is Tumor necrosis factor receptor superfamily member 4 (277 aa).

The first 28 residues, 1–28 (MCVGARRLGRGPCAALLLLGLGLSTVTG), serve as a signal peptide directing secretion. Residues 29–214 (LHCVGDTYPS…RPVEVPGGRA (186 aa)) are Extracellular-facing. 2 TNFR-Cys repeats span residues 30 to 65 (HCVGDTYPSNDRCCHECRPGNGMVSRCSRSQNTVCR) and 66 to 107 (PCGP…DTVC). 8 disulfide bridges follow: Cys-31-Cys-42, Cys-43-Cys-56, Cys-46-Cys-64, Cys-67-Cys-81, Cys-84-Cys-99, Cys-87-Cys-107, Cys-109-Cys-125, and Cys-128-Cys-141. The stretch at 108-126 (RCRAGTQPLDSYKPGVDCA) is one TNFR-Cys 3; truncated repeat. A TNFR-Cys 4 repeat occupies 127 to 167 (PCPPGHFSPGDNQACKPWTNCTLAGKHTLQPASNSSDAICE). 2 N-linked (GlcNAc...) asparagine glycosylation sites follow: Asn-146 and Asn-160. Cys-147 and Cys-166 are oxidised to a cystine. Positions 158–209 (ASNSSDAICEDRDPPATQPQETQGPPARPITVQPTEAWPRTSQGPSTRPVEV) are disordered. A helical membrane pass occupies residues 215 to 235 (VAAILGLGLVLGLLGPLAILL). The Cytoplasmic segment spans residues 236–277 (ALYLLRRDQRLPPDAHKPPGGGSFRTPIQEEQADAHSTLAKI). The segment at 248–277 (PDAHKPPGGGSFRTPIQEEQADAHSTLAKI) is disordered.

Interacts with TRAF2, TRAF3 and TRAF5. As to quaternary structure, (Microbial infection) Interacts with Human herpesvirus 6B/HHV-6B gQ1:gQ2 proteins.

It is found in the membrane. Receptor for TNFSF4/OX40L/GP34. Is a costimulatory molecule implicated in long-term T-cell immunity. Its function is as follows. (Microbial infection) Acts as a receptor for human herpesvirus 6B/HHV-6B. This chain is Tumor necrosis factor receptor superfamily member 4 (TNFRSF4), found in Homo sapiens (Human).